A 295-amino-acid polypeptide reads, in one-letter code: Undecaprenyl-diphosphatase (295 aa).

Transmembrane regions (helical) follow at residues 39 to 59 (PGAA…LLYF), 97 to 117 (WYII…QHAI), 121 to 141 (LRNL…LWIV), 198 to 218 (AFLM…VKAI), 232 to 252 (ATIA…IGFL), and 263 to 283 (FAIY…CGVL).

The protein belongs to the UppP family.

The protein resides in the cell membrane. The enzyme catalyses di-trans,octa-cis-undecaprenyl diphosphate + H2O = di-trans,octa-cis-undecaprenyl phosphate + phosphate + H(+). In terms of biological role, catalyzes the dephosphorylation of undecaprenyl diphosphate (UPP). Confers resistance to bacitracin. The polypeptide is Undecaprenyl-diphosphatase (Bifidobacterium animalis subsp. lactis (strain AD011)).